We begin with the raw amino-acid sequence, 205 residues long: Dephospho-CoA kinase (205 aa).

The 199-residue stretch at 7-205 (IIGITGRIAS…QEIINYERFE (199 aa)) folds into the DPCK domain. An ATP-binding site is contributed by 15–20 (ASGKDA).

This sequence belongs to the CoaE family.

The protein resides in the cytoplasm. The catalysed reaction is 3'-dephospho-CoA + ATP = ADP + CoA + H(+). Its pathway is cofactor biosynthesis; coenzyme A biosynthesis; CoA from (R)-pantothenate: step 5/5. Catalyzes the phosphorylation of the 3'-hydroxyl group of dephosphocoenzyme A to form coenzyme A. This chain is Dephospho-CoA kinase, found in Borrelia garinii subsp. bavariensis (strain ATCC BAA-2496 / DSM 23469 / PBi) (Borreliella bavariensis).